The primary structure comprises 403 residues: Methylthioribose-1-phosphate isomerase (403 aa).

Catalysis depends on D277, which acts as the Proton donor.

It belongs to the eIF-2B alpha/beta/delta subunits family. MtnA subfamily.

The protein resides in the cytoplasm. Its subcellular location is the nucleus. It carries out the reaction 5-(methylsulfanyl)-alpha-D-ribose 1-phosphate = 5-(methylsulfanyl)-D-ribulose 1-phosphate. The protein operates within amino-acid biosynthesis; L-methionine biosynthesis via salvage pathway; L-methionine from S-methyl-5-thio-alpha-D-ribose 1-phosphate: step 1/6. In terms of biological role, catalyzes the interconversion of methylthioribose-1-phosphate (MTR-1-P) into methylthioribulose-1-phosphate (MTRu-1-P). This chain is Methylthioribose-1-phosphate isomerase, found in Lodderomyces elongisporus (strain ATCC 11503 / CBS 2605 / JCM 1781 / NBRC 1676 / NRRL YB-4239) (Yeast).